The chain runs to 316 residues: Large ribosomal subunit protein uL10 (316 aa).

The interval 289–316 (AAAAAPAKEAPKEESEESDEDMGFGLFD) is disordered.

Belongs to the universal ribosomal protein uL10 family. As to quaternary structure, P0 forms a pentameric complex by interaction with dimers of P1 and P2. Phosphorylated.

Its subcellular location is the nucleus. The protein resides in the cytoplasm. Its function is as follows. Ribosomal protein P0 is the functional equivalent of E.coli protein L10. The chain is Large ribosomal subunit protein uL10 (RPLP0) from Gallus gallus (Chicken).